The chain runs to 269 residues: MLPYPQIDPVALAIGPLKIHWYGLMYLIGIGGAWLLASRRLNRFDPTWSKEKLSDMVFWMSMGVIVGGRLGYVLFYDLSAYLANPTLIFEVWKGGMSFHGGFIGVMLAAWWFGKRNNKTFFELMDFVAPMVPIGLGAGRIGNFINAELWGKPTDLPWAMVFPPFSDPAQLPRHPSQLYQFALEGVALFLILWLFSRKPRPTMAVSGMFALFYGIFRFIVEFVRVPDAQLGYLAWNWLTMGQVLCVPMILGGLGLIWLAYHRAPAKSAAQ.

The next 7 helical transmembrane spans lie at 10–30, 56–76, 92–112, 120–140, 174–194, 202–222, and 237–257; these read VALA…LIGI, MVFW…VLFY, WKGG…AWWF, FFEL…AGRI, PSQL…LWLF, MAVS…VEFV, and LTMG…LIWL. Arg139 contributes to the a 1,2-diacyl-sn-glycero-3-phospho-(1'-sn-glycerol) binding site.

The protein belongs to the Lgt family.

Its subcellular location is the cell inner membrane. It catalyses the reaction L-cysteinyl-[prolipoprotein] + a 1,2-diacyl-sn-glycero-3-phospho-(1'-sn-glycerol) = an S-1,2-diacyl-sn-glyceryl-L-cysteinyl-[prolipoprotein] + sn-glycerol 1-phosphate + H(+). Its pathway is protein modification; lipoprotein biosynthesis (diacylglyceryl transfer). Catalyzes the transfer of the diacylglyceryl group from phosphatidylglycerol to the sulfhydryl group of the N-terminal cysteine of a prolipoprotein, the first step in the formation of mature lipoproteins. The polypeptide is Phosphatidylglycerol--prolipoprotein diacylglyceryl transferase (Pseudomonas fluorescens (strain ATCC BAA-477 / NRRL B-23932 / Pf-5)).